Consider the following 394-residue polypeptide: Probable peptidoglycan glycosyltransferase FtsW (394 aa).

At 1–27 the chain is on the cytoplasmic side; the sequence is MSALRSVAGLLQRWLLPARPAGLYDRQ. A helical membrane pass occupies residues 28-48; sequence LVVLALALMAVGLVIVASASI. Topologically, residues 49-64 are periplasmic; sequence PEGIAINNDPFMFVKR. Residues 65-85 traverse the membrane as a helical segment; that stretch reads HGLFLVMALGISWFVLQVPMA. Over 86–88 the chain is Cytoplasmic; that stretch reads RWQ. A helical membrane pass occupies residues 89–109; that stretch reads HYNGPMLVLAILMLVLVLLVG. Topologically, residues 110–123 are periplasmic; that stretch reads RSVNGSIRWLPLGP. A helical membrane pass occupies residues 124–144; it reads FNLQPAEFGKLALFVYLAGYL. Over 145–154 the chain is Cytoplasmic; the sequence is VRRQSEVRER. A helical membrane pass occupies residues 155 to 175; the sequence is FIGFMKPMAVLFVVAILLLAQ. Residue P176 is a topological domain, periplasmic. The helical transmembrane segment at 177-197 threads the bilayer; the sequence is DLGSVVVMFVTSLGMLFLAGA. Position 198 (R198) is a topological domain, cytoplasmic. The chain crosses the membrane as a helical span at residues 199 to 219; the sequence is LGQFIGLILVGVSAVVTLVIA. At 220 to 279 the chain is on the periplasmic side; sequence EPYRMRRVTSFLDPWADPFGSGYQLTQSLMAFGRGSWFGEGLGNSIQKMEYLPEAHTDFV. Residues 280–300 form a helical membrane-spanning segment; sequence FAILGEELGYAGVLGALFLIF. Residues 301–322 are Cytoplasmic-facing; sequence ALSFKALKLGHQALVAERLYEG. A helical membrane pass occupies residues 323–343; the sequence is YLAIGIGIWFSFQTFVNVGAA. The Periplasmic segment spans residues 344–354; the sequence is SGMMPTKGLTL. A helical membrane pass occupies residues 355 to 375; sequence PLVSYGGSSLIIMMVAVSMLV. Residues 376-394 lie on the Cytoplasmic side of the membrane; sequence RIDFELRQASAQARVREVS.

Belongs to the SEDS family. FtsW subfamily.

The protein localises to the cell inner membrane. The enzyme catalyses [GlcNAc-(1-&gt;4)-Mur2Ac(oyl-L-Ala-gamma-D-Glu-L-Lys-D-Ala-D-Ala)](n)-di-trans,octa-cis-undecaprenyl diphosphate + beta-D-GlcNAc-(1-&gt;4)-Mur2Ac(oyl-L-Ala-gamma-D-Glu-L-Lys-D-Ala-D-Ala)-di-trans,octa-cis-undecaprenyl diphosphate = [GlcNAc-(1-&gt;4)-Mur2Ac(oyl-L-Ala-gamma-D-Glu-L-Lys-D-Ala-D-Ala)](n+1)-di-trans,octa-cis-undecaprenyl diphosphate + di-trans,octa-cis-undecaprenyl diphosphate + H(+). It participates in cell wall biogenesis; peptidoglycan biosynthesis. Peptidoglycan polymerase that is essential for cell division. The chain is Probable peptidoglycan glycosyltransferase FtsW from Aeromonas salmonicida (strain A449).